The sequence spans 421 residues: Tyrosine--tRNA ligase (421 aa).

Residue Tyr38 participates in L-tyrosine binding. The short motif at 43–52 (PTGDSLHIGH) is the 'HIGH' region element. The L-tyrosine site is built by Tyr169 and Gln173. Positions 231–235 (KFGKS) match the 'KMSKS' region motif. Lys234 is an ATP binding site. Positions 353–419 (KNLVDFLVDT…GKKKYTLVHI (67 aa)) constitute an S4 RNA-binding domain.

It belongs to the class-I aminoacyl-tRNA synthetase family. TyrS type 1 subfamily. As to quaternary structure, homodimer.

It is found in the cytoplasm. The catalysed reaction is tRNA(Tyr) + L-tyrosine + ATP = L-tyrosyl-tRNA(Tyr) + AMP + diphosphate + H(+). In terms of biological role, catalyzes the attachment of tyrosine to tRNA(Tyr) in a two-step reaction: tyrosine is first activated by ATP to form Tyr-AMP and then transferred to the acceptor end of tRNA(Tyr). In Lactobacillus delbrueckii subsp. bulgaricus (strain ATCC BAA-365 / Lb-18), this protein is Tyrosine--tRNA ligase.